We begin with the raw amino-acid sequence, 91 residues long: uncharacterized protein (91 aa).

This is an uncharacterized protein from Rickettsia prowazekii (strain Madrid E).